Consider the following 216-residue polypeptide: Pyridoxine/pyridoxamine 5'-phosphate oxidase (216 aa).

FMN-binding positions include 65–70 (RMVLLK), 80–81 (YT), arginine 86, lysine 87, and glutamine 109. Lysine 70 is a binding site for substrate. The substrate site is built by tyrosine 127, arginine 131, and serine 135. FMN-binding positions include 144-145 (QS) and tryptophan 189. Substrate is bound at residue 195-197 (RLH). Arginine 199 is a binding site for FMN.

Belongs to the pyridoxamine 5'-phosphate oxidase family. In terms of assembly, homodimer. The cofactor is FMN.

It catalyses the reaction pyridoxamine 5'-phosphate + O2 + H2O = pyridoxal 5'-phosphate + H2O2 + NH4(+). The enzyme catalyses pyridoxine 5'-phosphate + O2 = pyridoxal 5'-phosphate + H2O2. The protein operates within cofactor metabolism; pyridoxal 5'-phosphate salvage; pyridoxal 5'-phosphate from pyridoxamine 5'-phosphate: step 1/1. It participates in cofactor metabolism; pyridoxal 5'-phosphate salvage; pyridoxal 5'-phosphate from pyridoxine 5'-phosphate: step 1/1. Functionally, catalyzes the oxidation of either pyridoxine 5'-phosphate (PNP) or pyridoxamine 5'-phosphate (PMP) into pyridoxal 5'-phosphate (PLP). The sequence is that of Pyridoxine/pyridoxamine 5'-phosphate oxidase from Sphingopyxis alaskensis (strain DSM 13593 / LMG 18877 / RB2256) (Sphingomonas alaskensis).